A 278-amino-acid polypeptide reads, in one-letter code: Elongation factor Ts (278 aa).

The involved in Mg(2+) ion dislocation from EF-Tu stretch occupies residues 82–85 (TEPV).

This sequence belongs to the EF-Ts family.

It is found in the cytoplasm. In terms of biological role, associates with the EF-Tu.GDP complex and induces the exchange of GDP to GTP. It remains bound to the aminoacyl-tRNA.EF-Tu.GTP complex up to the GTP hydrolysis stage on the ribosome. The polypeptide is Elongation factor Ts (Cytophaga hutchinsonii (strain ATCC 33406 / DSM 1761 / CIP 103989 / NBRC 15051 / NCIMB 9469 / D465)).